A 172-amino-acid chain; its full sequence is Large ribosomal subunit protein uL10 (172 aa).

This sequence belongs to the universal ribosomal protein uL10 family. As to quaternary structure, part of the ribosomal stalk of the 50S ribosomal subunit. The N-terminus interacts with L11 and the large rRNA to form the base of the stalk. The C-terminus forms an elongated spine to which L12 dimers bind in a sequential fashion forming a multimeric L10(L12)X complex.

Forms part of the ribosomal stalk, playing a central role in the interaction of the ribosome with GTP-bound translation factors. The polypeptide is Large ribosomal subunit protein uL10 (rplJ) (Liberibacter asiaticus (Citrus greening disease)).